The following is a 480-amino-acid chain: Uridine/deoxyuridine transporter (480 aa).

The next 14 membrane-spanning stretches (helical) occupy residues 14-34 (VGSIVALMVALLVAIFAFQLN), 55-75 (SIALTQTIFFTAAALFALFLP), 93-113 (LTMIGCLISGFATNVGILMIG), 115-135 (ILQGAAGPVVPLCLIILHVKV), 147-167 (ILTSINGGIAGVDALAGGWLV), 174-194 (SVFFVMGITAALAILLVSFGT), 207-227 (WTGVILLVVAMGALLSAVNAL), 239-259 (WLLASILALLGLICFVGFWQV), 280-300 (GLLITTLLTMTGVFAIMNGII), 320-340 (LVTLTPYALAGLFFGPVSGFL), 358-378 (IIGIVLAVAGVLQPSIWLLLL), 382-402 (FIGITYAGITNIMLNGLGIVL), 417-437 (GMFNLGAGLSFIILYAVPTVL), and 449-469 (ISGIVTGLILVIIAFFTSFLI).

The protein belongs to the major facilitator superfamily. EmrB family.

The protein resides in the cell membrane. Responsible for the uptake of uridine and deoxyuridine. Not involved in purine nucleoside uptake. This chain is Uridine/deoxyuridine transporter, found in Lactococcus lactis subsp. cremoris (strain MG1363).